The sequence spans 508 residues: BTB/POZ domain-containing protein At3g03510 (508 aa).

The BTB domain occupies 11–77; sequence QDLDLYVKGV…CYGYKIELSA (67 aa). The NPH3 domain maps to 156-414; it reads TRLLQDLITL…MQVLFVSQMQ (259 aa). The residue at position 355 (tyrosine 355) is a Phosphotyrosine.

This sequence belongs to the NPH3 family.

It participates in protein modification; protein ubiquitination. In terms of biological role, may act as a substrate-specific adapter of an E3 ubiquitin-protein ligase complex (CUL3-RBX1-BTB) which mediates the ubiquitination and subsequent proteasomal degradation of target proteins. In Arabidopsis thaliana (Mouse-ear cress), this protein is BTB/POZ domain-containing protein At3g03510.